The primary structure comprises 470 residues: Ribulose bisphosphate carboxylase large chain (470 aa).

Substrate is bound by residues Asn-115 and Thr-165. Lys-167 serves as the catalytic Proton acceptor. Lys-169 provides a ligand contact to substrate. Mg(2+)-binding residues include Lys-193, Asp-195, and Glu-196. N6-carboxylysine is present on Lys-193. His-286 (proton acceptor) is an active-site residue. Substrate-binding residues include Arg-287, His-319, and Ser-371.

This sequence belongs to the RuBisCO large chain family. Type I subfamily. As to quaternary structure, heterohexadecamer of 8 large chains and 8 small chains. Forms a CsoS2-CsoS1-RuBisCO complex. Mg(2+) serves as cofactor.

The protein resides in the carboxysome. It catalyses the reaction 2 (2R)-3-phosphoglycerate + 2 H(+) = D-ribulose 1,5-bisphosphate + CO2 + H2O. The catalysed reaction is D-ribulose 1,5-bisphosphate + O2 = 2-phosphoglycolate + (2R)-3-phosphoglycerate + 2 H(+). RuBisCO catalyzes two reactions: the carboxylation of D-ribulose 1,5-bisphosphate, the primary event in carbon dioxide fixation, as well as the oxidative fragmentation of the pentose substrate in the photorespiration process. Both reactions occur simultaneously and in competition at the same active site. This Prochlorococcus marinus (strain MIT 9313) protein is Ribulose bisphosphate carboxylase large chain.